We begin with the raw amino-acid sequence, 124 residues long: Putative membrane protein insertion efficiency factor (124 aa).

Residues 1–12 (MCPQPHADHAIT) are compositionally biased toward basic and acidic residues. The interval 1–26 (MCPQPHADHAITRGDTGAAGGRNWSG) is disordered.

This sequence belongs to the UPF0161 family.

It localises to the cell inner membrane. Could be involved in insertion of integral membrane proteins into the membrane. This chain is Putative membrane protein insertion efficiency factor, found in Rhizobium meliloti (strain 1021) (Ensifer meliloti).